The chain runs to 366 residues: Acetylserotonin O-methyltransferase 3 (366 aa).

Residues G209, D232, D253, and K267 each contribute to the S-adenosyl-L-homocysteine site. H271 (proton acceptor) is an active-site residue. Active-site residues include E302 and E332.

The protein belongs to the class I-like SAM-binding methyltransferase superfamily. Cation-independent O-methyltransferase family. As to quaternary structure, homodimer. Expressed at low levels in roots, shoots, leaves, stems and flowers.

The protein localises to the cytoplasm. The enzyme catalyses N-acetylserotonin + S-adenosyl-L-methionine = melatonin + S-adenosyl-L-homocysteine + H(+). Its pathway is aromatic compound metabolism; melatonin biosynthesis; melatonin from serotonin: step 1/2. Methyltransferase which catalyzes the transfer of a methyl group onto N-acetylserotonin, producing melatonin (N-acetyl-5-methoxytryptamine). The protein is Acetylserotonin O-methyltransferase 3 of Oryza sativa subsp. japonica (Rice).